Reading from the N-terminus, the 343-residue chain is Uroporphyrinogen decarboxylase (343 aa).

Substrate contacts are provided by residues 24–28 (RQAGR), Phe-43, Asp-74, Tyr-151, Ser-206, and His-321.

It belongs to the uroporphyrinogen decarboxylase family. Homodimer.

The protein localises to the cytoplasm. The enzyme catalyses uroporphyrinogen III + 4 H(+) = coproporphyrinogen III + 4 CO2. The protein operates within porphyrin-containing compound metabolism; protoporphyrin-IX biosynthesis; coproporphyrinogen-III from 5-aminolevulinate: step 4/4. Catalyzes the decarboxylation of four acetate groups of uroporphyrinogen-III to yield coproporphyrinogen-III. The polypeptide is Uroporphyrinogen decarboxylase (Thermosynechococcus vestitus (strain NIES-2133 / IAM M-273 / BP-1)).